The sequence spans 184 residues: Ribosome maturation factor RimM (184 aa).

One can recognise a PRC barrel domain in the interval 112–184 (TDSYYWIDLI…SNKTISLDWQ (73 aa)).

It belongs to the RimM family. In terms of assembly, binds ribosomal protein uS19.

Its subcellular location is the cytoplasm. Functionally, an accessory protein needed during the final step in the assembly of 30S ribosomal subunit, possibly for assembly of the head region. Essential for efficient processing of 16S rRNA. May be needed both before and after RbfA during the maturation of 16S rRNA. It has affinity for free ribosomal 30S subunits but not for 70S ribosomes. This Polynucleobacter necessarius subsp. necessarius (strain STIR1) protein is Ribosome maturation factor RimM.